Consider the following 1193-residue polypeptide: Chloride channel protein 2 (1193 aa).

Topologically, residues 1-168 are cytoplasmic; sequence MVYFGDRQRD…WIWRHTVARL (168 aa). Residues 76 to 97 are disordered; that stretch reads SHAFYPCPPPAENARDSDSSDD. The next 2 helical transmembrane spans lie at 169-204 and 213-236; these read GEDWVFLALLGIIMALLSFIMDKGISICTNARIWLY and VQYIAWVSLPVCLILFSAGFVHLI. Positions 242-246 match the Selectivity filter part_1 motif; that stretch reads GSGIP. Ser-243 lines the chloride pocket. An intramembrane region (helical) is located at residues 245–252; that stretch reads IPEMKTIL. A run of 2 helical transmembrane segments spans residues 261-279 and 286-304; these read LTFKTLVAKVIGLTATLGS and EGPFVHIASIVAQLLSKLV. Positions 284-288 match the Selectivity filter part_2 motif; it reads GKEGP. 2 intramembrane regions (helical) span residues 320-332 and 336-344; these read MLAAACAVGVGAC and PVGGVLFSI. 5 helical membrane-spanning segments follow: residues 356 to 373, 402 to 430, 439 to 458, 511 to 530, and 536 to 555; these read YWRGFFAAVCGATVFRLL, LFVFALIGLVCGLGGASYVWVHRRYVLFM, FLQKNRFLYPGFLALLVSSI, FGNLVIYTLFTFVVSIIAST, and GMFIPVFKIGAGFGRLVGEF. Residues 536 to 540 carry the Selectivity filter part_3 motif; the sequence is GMFIP. Phe-538 provides a ligand contact to chloride. The helical intramembrane region spans 576-590; the sequence is GGYAVVGAAAFSGSV. The note=Loop between two helices intramembrane region spans 591–592; it reads TH. The helical intramembrane region spans 593–604; that stretch reads TVSVAVIIFEMT. The segment at residues 605 to 609 is an intramembrane region (note=Loop between two helices); the sequence is GQITH. Residues 610-626 form a helical membrane-spanning segment; the sequence is VVPVMIAVLVANAVAAL. The Cytoplasmic portion of the chain corresponds to 627 to 1193; the sequence is LQPSIYDSII…KSNTENGNHA (567 aa). A chloride-binding site is contributed by Tyr-632. Positions 663 to 723 constitute a CBS 1 domain; the sequence is MVRDVKYIWH…KMIEKHIGRE (61 aa). 3 disordered regions span residues 848–884, 1103–1122, and 1159–1193; these read TLQDVQPDPETGSLSPAASNHEVEVPRTPSTPGVSKK, NSFVPPTRDEDADEKPAVEK, and IKHTDKGTVSLTMPPQESKQSPSADKSNTENGNHA. The CBS 2 domain maps to 1048–1105; it reads IDPSPFQLVERTSILKVHSLFSMVGINHAYVTKIGRLVGVVGLKELRKAIEDINSNSF. Positions 1165–1193 are enriched in polar residues; sequence GTVSLTMPPQESKQSPSADKSNTENGNHA.

This sequence belongs to the chloride channel (TC 2.A.49) family. As to expression, at embryonic stages 13-16, expressed in a subset of the midline cells of the midline primordium and in all of the midline glia. Expressed along the Z-line of the sarcomere in larval longitudinal muscles.

It is found in the membrane. Voltage-gated chloride channel. Chloride channels have several functions including the regulation of cell volume; membrane potential stabilization, signal transduction and transepithelial transport. The sequence is that of Chloride channel protein 2 (ClC-a) from Drosophila melanogaster (Fruit fly).